The sequence spans 835 residues: MRRRNDPECTAPIKKQKKRVAELALNLSAASGDEPPSSVNHAAKASTTSLSGSDSETEGKQHGSDSFDDAFKADSLVEGTSSRYSMYNSVSQKLMAKMGFREGEGLGKYSQGRKDIVEASNQKGRRGLGLTLQGFDQELNVDWRDEPEPSACEQVSWFPECTTEIPDTQEMSDWMVVGKRKMVIEDETEFCGEELLHSVLQCKSVFDVLDGDEMRRARTRANPYEMIRGVFFLNRAAMKMANMDFVFDRMFTNPRDSCGKPLVKDREAELLYFADVCAGPGGFSEYVLWRKKWHAKGFGMTLKGPNDFKLEDFYSASSELFEPYYGEGGIDGDGDITRPENITAFRNFVLDNTDRKGVHFLMADGGFSVEGQENLQEILSKQLLLCQFLMALSVVRTGGHFICKTFDLFTPFSAGLIYLLYCCFERVCLFKPITSRPANSERYVVCKGLKVGIDDVRDYLFAVNIKLNQLHNTDSDVSLVVPLEVIKGDHEFTDYMIRSNESHCSLQIKALAKIHAFVQDTTLSEPRQAEIRKECLRLWGIPDQARVAPSSSDPKSKFFELIQGTEIDIFSYKPTLLTSKTLEKIRPVLDYRCMVSGSEQKFLIGLGKSQIYTWDGRQSDRWVKLDLKTELPRDTLLSVEIVHELKGEGKAQRKISAIHILDVLVLNGSDVREQHFNQRIQLAEKFVKAVSKPSRPDMNPIRVKEVYRLEEMEKIFVRLEMKIIKGSSGTPKLSYTGRDDRHFVPTGLYIVRTVNEPWTMGFSKSFKRKFFYNKKTKISTFDLPADSIAPFHICYYGRLFWEWGDGIRVHDSQKPQDPDKLSKEDVLSFIQTHSA.

The Bipartite nuclear localization signal signature appears at R2 to R19. A disordered region spans residues A24–D68. Residues S28, S31, S53, S66, and S91 each carry the phosphoserine modification. Over residues S37–D54 the composition is skewed to polar residues. The segment covering T57–D68 has biased composition (basic and acidic residues). A G-patch domain is found at Y87 to Q133. At K108 the chain carries N6-acetyllysine. Substrate-binding positions include K203–D207 and R218. The region spanning F231–K450 is the RrmJ-type SAM-dependent 2'-O-MTase domain. N234 is an S-adenosyl-L-methionine binding site. K239 is a catalytic residue. S-adenosyl-L-methionine contacts are provided by residues C277–F283 and D335–I336. Residue D364 is part of the active site. Substrate is bound at residue N374–Q376. Residue K404 is the Proton acceptor of the active site. Position 439 (N439) interacts with substrate. An interaction with POLR2A region spans residues S727–A835. In terms of domain architecture, WW spans R752 to D786.

Interacts with POLR2A (via C-terminus).

It localises to the nucleus. The catalysed reaction is a 5'-end (N(7)-methyl 5'-triphosphoguanosine)-ribonucleoside in mRNA + S-adenosyl-L-methionine = a 5'-end (N(7)-methyl 5'-triphosphoguanosine)-(2'-O-methyl-ribonucleoside) in mRNA + S-adenosyl-L-homocysteine + H(+). Its function is as follows. S-adenosyl-L-methionine-dependent methyltransferase that mediates mRNA cap1 2'-O-ribose methylation to the 5'-cap structure of mRNAs. Methylates the ribose of the first nucleotide of a m(7)GpppG-capped mRNA and small nuclear RNA (snRNA) to produce m(7)GpppRm (cap1). Displays a preference for cap0 transcripts. Cap1 modification is linked to higher levels of translation. May be involved in the interferon response pathway. The protein is Cap-specific mRNA (nucleoside-2'-O-)-methyltransferase 1 (CMTR1) of Ailuropoda melanoleuca (Giant panda).